Reading from the N-terminus, the 601-residue chain is Elongation factor 4 (601 aa).

The tr-type G domain maps to 6–188 (NRIRNFCIIA…QVVTKIAPPK (183 aa)). GTP is bound by residues 18–23 (DHGKST) and 135–138 (NKID).

The protein belongs to the TRAFAC class translation factor GTPase superfamily. Classic translation factor GTPase family. LepA subfamily.

The protein localises to the cell membrane. The enzyme catalyses GTP + H2O = GDP + phosphate + H(+). Its function is as follows. Required for accurate and efficient protein synthesis under certain stress conditions. May act as a fidelity factor of the translation reaction, by catalyzing a one-codon backward translocation of tRNAs on improperly translocated ribosomes. Back-translocation proceeds from a post-translocation (POST) complex to a pre-translocation (PRE) complex, thus giving elongation factor G a second chance to translocate the tRNAs correctly. Binds to ribosomes in a GTP-dependent manner. This Desulforamulus reducens (strain ATCC BAA-1160 / DSM 100696 / MI-1) (Desulfotomaculum reducens) protein is Elongation factor 4.